The primary structure comprises 331 residues: Aflatoxin B1 aldehyde reductase member 4 (331 aa).

NADP(+) is bound at residue aspartate 44. The Proton donor role is filled by tyrosine 49. At serine 85 the chain carries Phosphoserine. Histidine 113 contacts substrate. Residues 143-144 (SN), glutamine 169, 198-208 (NPLAGGLLTGK), and arginine 222 contribute to the NADP(+) site. Tyrosine 232 is a substrate binding site. 290–298 (SSLEQLEQN) is an NADP(+) binding site.

It belongs to the aldo/keto reductase family. Aldo/keto reductase 2 subfamily. As to expression, mainly expressed in uterus.

Can reduce the dialdehyde protein-binding form of aflatoxin B1 (AFB1) to the non-binding AFB1 dialcohol. May be involved in protection of liver against the toxic and carcinogenic effects of AFB1, a potent hepatocarcinogen. The polypeptide is Aflatoxin B1 aldehyde reductase member 4 (AKR7L) (Homo sapiens (Human)).